The chain runs to 186 residues: Protein Syd (186 aa).

Belongs to the Syd family.

Its subcellular location is the cell inner membrane. In terms of biological role, interacts with the SecY protein in vivo. May bind preferentially to an uncomplexed state of SecY, thus functioning either as a chelating agent for excess SecY in the cell or as a regulatory factor that negatively controls the translocase function. The protein is Protein Syd of Erwinia tasmaniensis (strain DSM 17950 / CFBP 7177 / CIP 109463 / NCPPB 4357 / Et1/99).